We begin with the raw amino-acid sequence, 88 residues long: MDIDNKPRIHWACRRGMRELDISIMPFFEHDYDTLSDDDKRNFIRLLQCDDPDLFNWLMNHGEPTDQGLKHMVSLIQTRNKNRGPVAM.

This sequence belongs to the SdhE FAD assembly factor family. As to quaternary structure, monomer. Makes weak or transient interactions with SdhA. Interacts with YgfX. Interacts with FrdA.

The protein resides in the cytoplasm. It functions in the pathway antibiotic biosynthesis; prodigiosin biosynthesis. In terms of biological role, an FAD assembly protein, which accelerates covalent attachment of the cofactor into other proteins. Plays an essential role in the assembly of succinate dehydrogenase (SDH, respiratory complex II), an enzyme complex that is a component of both the tricarboxylic acid cycle and the electron transport chain, and which couples the oxidation of succinate to fumarate with the reduction of ubiquinone (coenzyme Q) to ubiquinol. Required for flavinylation (covalent attachment of FAD) of the flavoprotein subunit SdhA of SDH. Required for flavinylation of the flavoprotein subunit FrdA of fumarate reductase (FRD). Flavinylation of SDH and FRD occurs in a similar but not identical manner, as site-specific mutations display subtle differences between them. Flavinylates SdhA in vivo in the absence of the other SDH subunits; SdhE mutants that do not flavinylate also interfere with wild-type activity in a possible dominant-negative fashion. Weakly binds to FAD and facilitates its binding to SdhA. Required for production of prodigiosin antibiotic (Pig); overproduction of SdhE in a deletion mutant leads to decreased synthesis of Pig compared to wild-type. Capable of flavinylating A.pasteurianus SdhA when the SDH operon and this gene are expressed in G.oxydans; flavinylation of SdhA is detected only in the presence of sdhE. The polypeptide is FAD assembly factor SdhE (Serratia sp. (strain ATCC 39006) (Prodigiosinella confusarubida)).